A 541-amino-acid chain; its full sequence is Protein yellow (541 aa).

An N-terminal signal peptide occupies residues 1 to 21; that stretch reads MFQDKGWVLVTLIALVTPSWA. A glycan (N-linked (GlcNAc...) asparagine) is linked at asparagine 144.

Belongs to the major royal jelly protein family.

The protein resides in the secreted. In terms of biological role, controls the pigmentation pattern of the adult cuticle and larval mouth parts. The protein is Protein yellow (y) of Drosophila erecta (Fruit fly).